The sequence spans 310 residues: Glutamyl-Q tRNA(Asp) synthetase (310 aa).

L-glutamate-binding positions include 8-12 (RFAPS) and E44. The 'HIGH' region signature appears at 11–21 (PSPTGPLHLGS). Zn(2+) is bound by residues C100, C102, Y123, and C127. Positions 183 and 201 each coordinate L-glutamate. The 'KMSKS' region signature appears at 239-243 (KLSKQ). Residue K242 coordinates ATP.

This sequence belongs to the class-I aminoacyl-tRNA synthetase family. GluQ subfamily. Requires Zn(2+) as cofactor.

Functionally, catalyzes the tRNA-independent activation of glutamate in presence of ATP and the subsequent transfer of glutamate onto a tRNA(Asp). Glutamate is transferred on the 2-amino-5-(4,5-dihydroxy-2-cyclopenten-1-yl) moiety of the queuosine in the wobble position of the QUC anticodon. The sequence is that of Glutamyl-Q tRNA(Asp) synthetase from Cupriavidus metallidurans (strain ATCC 43123 / DSM 2839 / NBRC 102507 / CH34) (Ralstonia metallidurans).